The sequence spans 337 residues: uncharacterized protein (337 aa).

Positions 5-235 constitute an ABC transporter domain; that stretch reads VEFDNVSRLY…PRTPFVAGFV (231 aa). 37–44 serves as a coordination point for ATP; that stretch reads GPSGSGKT.

Belongs to the ABC transporter superfamily.

Its function is as follows. Probably part of the ABC transporter complex YdcSTUV. Probably responsible for energy coupling to the transport system. This is an uncharacterized protein from Escherichia coli (strain K12).